The following is a 506-amino-acid chain: Histidine ammonia-lyase (506 aa).

The segment at residues 143–145 (ASG) is a cross-link (5-imidazolinone (Ala-Gly)). Serine 144 carries the post-translational modification 2,3-didehydroalanine (Ser).

Belongs to the PAL/histidase family. Contains an active site 4-methylidene-imidazol-5-one (MIO), which is formed autocatalytically by cyclization and dehydration of residues Ala-Ser-Gly.

It localises to the cytoplasm. The enzyme catalyses L-histidine = trans-urocanate + NH4(+). Its pathway is amino-acid degradation; L-histidine degradation into L-glutamate; N-formimidoyl-L-glutamate from L-histidine: step 1/3. The chain is Histidine ammonia-lyase from Salmonella paratyphi C (strain RKS4594).